The sequence spans 503 residues: Probable cytosol aminopeptidase (503 aa).

Mn(2+)-binding residues include Lys-270 and Asp-275. Residue Lys-282 is part of the active site. Residues Asp-293, Asp-352, and Glu-354 each coordinate Mn(2+). The active site involves Arg-356.

The protein belongs to the peptidase M17 family. The cofactor is Mn(2+).

The protein localises to the cytoplasm. The enzyme catalyses Release of an N-terminal amino acid, Xaa-|-Yaa-, in which Xaa is preferably Leu, but may be other amino acids including Pro although not Arg or Lys, and Yaa may be Pro. Amino acid amides and methyl esters are also readily hydrolyzed, but rates on arylamides are exceedingly low.. The catalysed reaction is Release of an N-terminal amino acid, preferentially leucine, but not glutamic or aspartic acids.. Presumably involved in the processing and regular turnover of intracellular proteins. Catalyzes the removal of unsubstituted N-terminal amino acids from various peptides. The chain is Probable cytosol aminopeptidase from Shigella boydii serotype 18 (strain CDC 3083-94 / BS512).